The primary structure comprises 494 residues: Sugar phosphate exchanger 3 (494 aa).

A helical membrane pass occupies residues 10–30 (GALLTSFSHHHLAVFLLTFFS). N-linked (GlcNAc...) asparagine glycosylation occurs at asparagine 58. 5 helical membrane-spanning segments follow: residues 81 to 101 (TLFL…GLFI), 113 to 133 (WVLS…GTLT), 146 to 166 (GLWI…VAVM), 177 to 197 (VVFG…AFLA), and 209 to 229 (FLVT…GLLV). Residues 240-261 (GAEESSEEDSQRPLIDGAENED) are disordered. 6 consecutive transmembrane segments (helical) span residues 297 to 317 (LAYA…PFYL), 333 to 353 (IWYD…SDVL), 357 to 377 (APVL…YSRS), 386 to 406 (LLMT…SSAI), 428 to 448 (GIVD…VSLI), and 457 to 477 (VFYF…PLIV).

It belongs to the major facilitator superfamily. Organophosphate:Pi antiporter (OPA) (TC 2.A.1.4) family. Interacts with ATRAID; the interaction is direct and both proteins are mutually dependent for their stability. Glycosylated.

It localises to the endoplasmic reticulum membrane. The protein localises to the lysosome membrane. Its function is as follows. Unlike the other SLC37 members, lacks glucose-6-phosphate antiporter activity. In osteoclasts, forms a transporter complex with ATRAID for nitrogen-containing-bisphophonates (N-BPs) required for releasing N-BP molecules that have trafficked to lysosomes through fluid-phase endocytosis into the cytosol. The chain is Sugar phosphate exchanger 3 (Slc37a3) from Mus musculus (Mouse).